A 218-amino-acid polypeptide reads, in one-letter code: Thiopurine S-methyltransferase (218 aa).

S-adenosyl-L-methionine-binding residues include tryptophan 10, leucine 45, glutamate 66, and arginine 123.

Belongs to the class I-like SAM-binding methyltransferase superfamily. TPMT family.

The protein resides in the cytoplasm. The catalysed reaction is S-adenosyl-L-methionine + a thiopurine = S-adenosyl-L-homocysteine + a thiopurine S-methylether.. The polypeptide is Thiopurine S-methyltransferase (Shewanella sp. (strain W3-18-1)).